An 86-amino-acid chain; its full sequence is uncharacterized protein (86 aa).

This sequence to C.jejuni CJ0253.

This is an uncharacterized protein from Helicobacter pylori (strain J99 / ATCC 700824) (Campylobacter pylori J99).